Consider the following 177-residue polypeptide: ATP synthase subunit delta (177 aa).

Belongs to the ATPase delta chain family. As to quaternary structure, F-type ATPases have 2 components, F(1) - the catalytic core - and F(0) - the membrane proton channel. F(1) has five subunits: alpha(3), beta(3), gamma(1), delta(1), epsilon(1). F(0) has three main subunits: a(1), b(2) and c(10-14). The alpha and beta chains form an alternating ring which encloses part of the gamma chain. F(1) is attached to F(0) by a central stalk formed by the gamma and epsilon chains, while a peripheral stalk is formed by the delta and b chains.

It is found in the cell inner membrane. F(1)F(0) ATP synthase produces ATP from ADP in the presence of a proton or sodium gradient. F-type ATPases consist of two structural domains, F(1) containing the extramembraneous catalytic core and F(0) containing the membrane proton channel, linked together by a central stalk and a peripheral stalk. During catalysis, ATP synthesis in the catalytic domain of F(1) is coupled via a rotary mechanism of the central stalk subunits to proton translocation. Functionally, this protein is part of the stalk that links CF(0) to CF(1). It either transmits conformational changes from CF(0) to CF(1) or is implicated in proton conduction. The sequence is that of ATP synthase subunit delta from Neisseria gonorrhoeae (strain ATCC 700825 / FA 1090).